Reading from the N-terminus, the 319-residue chain is Acetyl-coenzyme A carboxylase carboxyl transferase subunit alpha (319 aa).

Residues 35-296 enclose the CoA carboxyltransferase C-terminal domain; that stretch reads DLDKEIEQLE…KATLVANLAE (262 aa).

The protein belongs to the AccA family. Acetyl-CoA carboxylase is a heterohexamer composed of biotin carboxyl carrier protein (AccB), biotin carboxylase (AccC) and two subunits each of ACCase subunit alpha (AccA) and ACCase subunit beta (AccD).

The protein resides in the cytoplasm. The enzyme catalyses N(6)-carboxybiotinyl-L-lysyl-[protein] + acetyl-CoA = N(6)-biotinyl-L-lysyl-[protein] + malonyl-CoA. It functions in the pathway lipid metabolism; malonyl-CoA biosynthesis; malonyl-CoA from acetyl-CoA: step 1/1. Its function is as follows. Component of the acetyl coenzyme A carboxylase (ACC) complex. First, biotin carboxylase catalyzes the carboxylation of biotin on its carrier protein (BCCP) and then the CO(2) group is transferred by the carboxyltransferase to acetyl-CoA to form malonyl-CoA. This Photobacterium profundum (strain SS9) protein is Acetyl-coenzyme A carboxylase carboxyl transferase subunit alpha.